The following is a 404-amino-acid chain: Tryptophan synthase beta chain (404 aa).

Position 94 is an N6-(pyridoxal phosphate)lysine (Lys-94).

Belongs to the TrpB family. As to quaternary structure, tetramer of two alpha and two beta chains. Pyridoxal 5'-phosphate is required as a cofactor.

It carries out the reaction (1S,2R)-1-C-(indol-3-yl)glycerol 3-phosphate + L-serine = D-glyceraldehyde 3-phosphate + L-tryptophan + H2O. Its pathway is amino-acid biosynthesis; L-tryptophan biosynthesis; L-tryptophan from chorismate: step 5/5. Functionally, the beta subunit is responsible for the synthesis of L-tryptophan from indole and L-serine. The protein is Tryptophan synthase beta chain of Staphylococcus aureus (strain USA300).